The sequence spans 548 residues: Natural resistance-associated macrophage protein 1 (548 aa).

Residues 1-38 (MSGDTGPPKQGGTRYGSISSPPSPEPQQAPPGGTYLSE) form a disordered region. At 1–55 (MSGDTGPPKQGGTRYGSISSPPSPEPQQAPPGGTYLSEKIPIPDTESGTFSLRKL) the chain is on the cytoplasmic side. The helical transmembrane segment at 56–73 (WAFTGPGFLMSIAFLDPG) threads the bilayer. The Extracellular portion of the chain corresponds to 74–82 (NIESDLQAG). A helical membrane pass occupies residues 83–102 (AVAGFKLLWVLLWATVLGLL). Residues 103 to 139 (CQRLAARLGVVTGKDLGEVCHLYYPKVPRILLWLTIE) are Cytoplasmic-facing. The chain crosses the membrane as a helical span at residues 140–160 (LAIVGSDMQEVIGTAIAFSLL). Over 161–164 (SAGR) the chain is Extracellular. The helical transmembrane segment at 165–184 (IPLWGGVLITIVDAFFFLFL) threads the bilayer. The Cytoplasmic portion of the chain corresponds to 185–193 (DNYGLRKLE). The helical transmembrane segment at 194–214 (AFFGFLITIMALTFGYEYVVA) threads the bilayer. Topologically, residues 215-237 (QPAQGALLQGLFLPSCPGCGQPE) are extracellular. A helical transmembrane segment spans residues 238–256 (LLQAVGIIGAIIMPHNIYL). The Cytoplasmic segment spans residues 257-284 (HSSLVKSREVDRSRRADIREANMYFLIE). The chain crosses the membrane as a helical span at residues 285–304 (ATIALSVSFLINLFVMAVFG). Over 305 to 346 (QAFYKQTNQAAFNICANSSLQDYAPIFPRNNLTVAVDIYQGG) the chain is Extracellular. N-linked (GlcNAc...) asparagine glycans are attached at residues Asn-321 and Asn-335. A helical transmembrane segment spans residues 347-366 (VILGCLFGPAALYIWAVGLL). At 367-397 (AAGQSSTMTGTYAGQFVMEGFLKLRWSRFAR) the chain is on the cytoplasmic side. The chain crosses the membrane as a helical span at residues 398 to 415 (VLLTRSCAILPTVLLAVF). Residues 416 to 426 (RDLRDLSGLND) are Extracellular-facing. Residues 427 to 447 (LLNVLQSLLLPFAVLPILTFT) form a helical membrane-spanning segment. Residues 448-463 (SMPALMREFANGLVSK) are Cytoplasmic-facing. A helical membrane pass occupies residues 464–485 (VITSSIMVLVCAVNLYFVISYV). The Extracellular segment spans residues 486 to 493 (PSLPHPAY). A helical membrane pass occupies residues 494 to 513 (FSLVALLAAAYLGLTTYLVW). At 514–548 (TCLITQGATLLAHSSHQRFLYGLPEEDQEKGRTSG) the chain is on the cytoplasmic side.

Belongs to the NRAMP family.

It is found in the late endosome membrane. The protein resides in the lysosome membrane. The catalysed reaction is Zn(2+)(in) + H(+)(out) = Zn(2+)(out) + H(+)(in). It catalyses the reaction Fe(2+)(in) + H(+)(out) = Fe(2+)(out) + H(+)(in). It carries out the reaction Mn(2+)(in) + H(+)(out) = Mn(2+)(out) + H(+)(in). Macrophage-specific antiporter that fluxes metal ions in either direction against a proton gradient. Localized to late endosomal lysosomal membranes, delivers bivalent cations from the cytosol into these acidic compartments where they may directly affect antimicrobial activity. Involved in iron metabolism and host natural resistance to infection with intracellular parasites. Pathogen resistance involves sequestration of Fe(2+) and Mn(2+), cofactors of both prokaryotic and eukaryotic catalases and superoxide dismutases, not only to protect the macrophage against its own generation of reactive oxygen species, but to deny the cations to the pathogen for synthesis of its protective enzymes. The protein is Natural resistance-associated macrophage protein 1 (SLC11A1) of Bison bison (American bison).